The sequence spans 156 residues: Aspartate carbamoyltransferase regulatory chain (156 aa).

Zn(2+) is bound by residues Cys-110, Cys-115, Cys-140, and Cys-143.

This sequence belongs to the PyrI family. In terms of assembly, contains catalytic and regulatory chains. Zn(2+) is required as a cofactor.

Functionally, involved in allosteric regulation of aspartate carbamoyltransferase. The protein is Aspartate carbamoyltransferase regulatory chain of Methanocella arvoryzae (strain DSM 22066 / NBRC 105507 / MRE50).